A 150-amino-acid chain; its full sequence is Transcriptional regulator MraZ (150 aa).

SpoVT-AbrB domains follow at residues 7–58 and 87–130; these read KEQH…EPEI and LDSV…SPEK.

This sequence belongs to the MraZ family. In terms of assembly, forms oligomers.

The protein localises to the cytoplasm. The protein resides in the nucleoid. This Chlorobium phaeobacteroides (strain BS1) protein is Transcriptional regulator MraZ.